We begin with the raw amino-acid sequence, 117 residues long: Immunoglobulin lambda variable 10-54 (117 aa).

The first 21 residues, Met-1–Ala-21, serve as a signal peptide directing secretion. Residues Gln-20 to Gly-43 form a framework-1 region. Positions Gly-22 to Ala-117 constitute an Ig-like domain. Cysteines 41 and 108 form a disulfide. The complementarity-determining-1 stretch occupies residues Asn-44–Gly-52. The tract at residues Ala-53–Tyr-69 is framework-2. The tract at residues Arg-70–Asn-72 is complementarity-determining-2. The interval Asn-73–Cys-108 is framework-3. A complementarity-determining-3 region spans residues Ser-109–Ala-117.

As to quaternary structure, immunoglobulins are composed of two identical heavy chains and two identical light chains; disulfide-linked.

It is found in the secreted. Its subcellular location is the cell membrane. V region of the variable domain of immunoglobulin light chains that participates in the antigen recognition. Immunoglobulins, also known as antibodies, are membrane-bound or secreted glycoproteins produced by B lymphocytes. In the recognition phase of humoral immunity, the membrane-bound immunoglobulins serve as receptors which, upon binding of a specific antigen, trigger the clonal expansion and differentiation of B lymphocytes into immunoglobulins-secreting plasma cells. Secreted immunoglobulins mediate the effector phase of humoral immunity, which results in the elimination of bound antigens. The antigen binding site is formed by the variable domain of one heavy chain, together with that of its associated light chain. Thus, each immunoglobulin has two antigen binding sites with remarkable affinity for a particular antigen. The variable domains are assembled by a process called V-(D)-J rearrangement and can then be subjected to somatic hypermutations which, after exposure to antigen and selection, allow affinity maturation for a particular antigen. The chain is Immunoglobulin lambda variable 10-54 from Homo sapiens (Human).